A 471-amino-acid chain; its full sequence is Siroheme synthase 1 (471 aa).

Residues 1–203 form a precorrin-2 dehydrogenase /sirohydrochlorin ferrochelatase region; the sequence is MDYLPLFAEL…GNSAEAEKAL (203 aa). Residues 22–23 and 43–44 contribute to the NAD(+) site; these read EI and ET. Ser128 carries the post-translational modification Phosphoserine. The uroporphyrinogen-III C-methyltransferase stretch occupies residues 215–471; the sequence is GEIILVGAGP…GFNASVVNLA (257 aa). Residue Pro224 coordinates S-adenosyl-L-methionine. Asp247 serves as the catalytic Proton acceptor. Residue Lys269 is the Proton donor of the active site. S-adenosyl-L-methionine is bound by residues 300–302, Ile305, 330–331, Met382, and Gly411; these read GGD and TA.

In the N-terminal section; belongs to the precorrin-2 dehydrogenase / sirohydrochlorin ferrochelatase family. The protein in the C-terminal section; belongs to the precorrin methyltransferase family.

The catalysed reaction is uroporphyrinogen III + 2 S-adenosyl-L-methionine = precorrin-2 + 2 S-adenosyl-L-homocysteine + H(+). The enzyme catalyses precorrin-2 + NAD(+) = sirohydrochlorin + NADH + 2 H(+). It carries out the reaction siroheme + 2 H(+) = sirohydrochlorin + Fe(2+). The protein operates within cofactor biosynthesis; adenosylcobalamin biosynthesis; precorrin-2 from uroporphyrinogen III: step 1/1. Its pathway is cofactor biosynthesis; adenosylcobalamin biosynthesis; sirohydrochlorin from precorrin-2: step 1/1. It participates in porphyrin-containing compound metabolism; siroheme biosynthesis; precorrin-2 from uroporphyrinogen III: step 1/1. It functions in the pathway porphyrin-containing compound metabolism; siroheme biosynthesis; siroheme from sirohydrochlorin: step 1/1. The protein operates within porphyrin-containing compound metabolism; siroheme biosynthesis; sirohydrochlorin from precorrin-2: step 1/1. Multifunctional enzyme that catalyzes the SAM-dependent methylations of uroporphyrinogen III at position C-2 and C-7 to form precorrin-2 via precorrin-1. Then it catalyzes the NAD-dependent ring dehydrogenation of precorrin-2 to yield sirohydrochlorin. Finally, it catalyzes the ferrochelation of sirohydrochlorin to yield siroheme. This chain is Siroheme synthase 1, found in Klebsiella pneumoniae subsp. pneumoniae (strain ATCC 700721 / MGH 78578).